The following is a 207-amino-acid chain: Heat shock protein beta-1 (207 aa).

Position 12 is an omega-N-methylarginine (arginine 12). A Phosphoserine modification is found at serine 13. Serine 15 carries the post-translational modification Phosphoserine; by MAPKAPK2 and MAPKAPK3. Serine 27 is subject to Phosphoserine. An interaction with TGFB1I1 region spans residues 72–207; that stretch reads APAYSRLLSR…AGKSEKPGTK (136 aa). The sHSP domain maps to 78–186; the sequence is LLSRQLSSGV…QSAEITIPVT (109 aa). Serine 80 and serine 84 each carry phosphoserine; by MAPKAPK2, MAPKAPK3 and MAPKAPK5. A phosphoserine mark is found at serine 85, serine 88, and serine 100. Lysine 125 carries the post-translational modification N6-acetyllysine. Residues 151-181 form a disordered region; that stretch reads DPTQVSSSLSPEGTLSVEAPLPKPATQSAEI. The segment covering 153–163 has biased composition (polar residues); that stretch reads TQVSSSLSPEG. Threonine 176 carries the post-translational modification Phosphothreonine. A phosphoserine mark is found at serine 178 and serine 201.

This sequence belongs to the small heat shock protein (HSP20) family. In terms of assembly, homooligomer. Homodimer; becomes monomeric upon activation. Heterooligomer; with HSPB6. Associates with alpha- and beta-tubulin. Interacts with TGFB1I1. Interacts with CRYAB. Interacts with HSPB8. Interacts with HSPBAP1. Phosphorylated upon exposure to protein kinase C activators and heat shock. Phosphorylation by MAPKAPK2 and MAPKAPK3 in response to stress dissociates HSPB1 from large small heat-shock protein (sHsps) oligomers and impairs its chaperone activity and ability to protect against oxidative stress effectively. Phosphorylation by MAPKAPK5 in response to PKA stimulation induces F-actin rearrangement.

Its subcellular location is the cytoplasm. The protein resides in the nucleus. It is found in the cytoskeleton. The protein localises to the spindle. In terms of biological role, small heat shock protein which functions as a molecular chaperone probably maintaining denatured proteins in a folding-competent state. Plays a role in stress resistance and actin organization. Through its molecular chaperone activity may regulate numerous biological processes including the phosphorylation and the axonal transport of neurofilament proteins. The protein is Heat shock protein beta-1 (HSPB1) of Sus scrofa (Pig).